A 232-amino-acid polypeptide reads, in one-letter code: Ubiquinone biosynthesis O-methyltransferase (232 aa).

Residues R36, G55, D76, and L120 each contribute to the S-adenosyl-L-methionine site.

It belongs to the methyltransferase superfamily. UbiG/COQ3 family.

It carries out the reaction a 3-demethylubiquinol + S-adenosyl-L-methionine = a ubiquinol + S-adenosyl-L-homocysteine + H(+). The enzyme catalyses a 3-(all-trans-polyprenyl)benzene-1,2-diol + S-adenosyl-L-methionine = a 2-methoxy-6-(all-trans-polyprenyl)phenol + S-adenosyl-L-homocysteine + H(+). It functions in the pathway cofactor biosynthesis; ubiquinone biosynthesis. In terms of biological role, O-methyltransferase that catalyzes the 2 O-methylation steps in the ubiquinone biosynthetic pathway. The chain is Ubiquinone biosynthesis O-methyltransferase from Dechloromonas aromatica (strain RCB).